We begin with the raw amino-acid sequence, 332 residues long: Solute carrier family 25 member 16 (332 aa).

3 Solcar repeats span residues 34 to 120, 128 to 216, and 238 to 328; these read FYWL…YKTL, SGHV…LKSV, and LKTH…MKQF. 6 helical membrane-spanning segments follow: residues 37-57, 88-108, 134-154, 191-211, 244-264, and 299-319; these read LRSF…VAPL, GFLG…PYGA, LMAG…LDMV, GLMP…FTFG, LLCG…FDVT, and GLYR…AVAF.

The protein belongs to the mitochondrial carrier (TC 2.A.29) family.

The protein resides in the mitochondrion inner membrane. In terms of biological role, may be involved in the transport of coenzyme A in the mitochondrial matrix. Very little is known about the physiological function of this carrier. The chain is Solute carrier family 25 member 16 from Homo sapiens (Human).